The chain runs to 311 residues: Giardin subunit gamma (311 aa).

Residues 185–233 (GLQTEINSLEAIIEREFAQAANRLNQEVSNFKESFDASERNIKLQKKHV) adopt a coiled-coil conformation.

Interacts with EB1.

It is found in the cytoplasm. It localises to the cytoskeleton. Giardins are involved in parasite attachment to the intestinal mucosa and in the cytoskeletal disassembly and reassembly that marks the transition from infectious trophozoite to transmissible cyst. They may interact with other cytoskeletal proteins such as microtubules in the microribbons or crossbridges, to maintain the integrity of the ventral disk. Involved in formation of the ventral disk. The chain is Giardin subunit gamma from Giardia intestinalis (Giardia lamblia).